Here is a 332-residue protein sequence, read N- to C-terminus: Glyceraldehyde-3-phosphate dehydrogenase (332 aa).

NAD(+) contacts are provided by residues 10 to 11, aspartate 32, and methionine 77; that span reads RI. D-glyceraldehyde 3-phosphate-binding positions include 148–150, threonine 179, 208–209, and arginine 231; these read SCT and TG. The active-site Nucleophile is the cysteine 149. Asparagine 313 is a binding site for NAD(+).

The protein belongs to the glyceraldehyde-3-phosphate dehydrogenase family. In terms of assembly, homotetramer.

Its subcellular location is the cytoplasm. The enzyme catalyses D-glyceraldehyde 3-phosphate + phosphate + NAD(+) = (2R)-3-phospho-glyceroyl phosphate + NADH + H(+). It functions in the pathway carbohydrate degradation; glycolysis; pyruvate from D-glyceraldehyde 3-phosphate: step 1/5. The sequence is that of Glyceraldehyde-3-phosphate dehydrogenase (GPDA) from Phytophthora infestans (Potato late blight agent).